Here is a 671-residue protein sequence, read N- to C-terminus: Talaropentaene synthase (671 aa).

Position 92 (aspartate 92) interacts with Mg(2+). A DDXXD 1 motif is present at residues aspartate 92–aspartate 96. Positions asparagine 223–glutamate 231 match the NSE/DTE motif. Positions 389, 392, and 421 each coordinate isopentenyl diphosphate. Aspartate 428 and aspartate 432 together coordinate Mg(2+). Positions aspartate 428–aspartate 432 match the DDXXD 2 motif. Dimethylallyl diphosphate is bound at residue arginine 437. Arginine 438 lines the isopentenyl diphosphate pocket. Residues lysine 515, threonine 516, glutamine 551, asparagine 558, lysine 568, and lysine 578 each contribute to the dimethylallyl diphosphate site.

The protein in the N-terminal section; belongs to the terpene synthase family. This sequence in the C-terminal section; belongs to the FPP/GGPP synthase family. Mg(2+) is required as a cofactor.

The catalysed reaction is 5 isopentenyl diphosphate + dimethylallyl diphosphate = all-trans-hexaprenyl diphosphate + 5 diphosphate. The enzyme catalyses all-trans-hexaprenyl diphosphate = talaropentaene + diphosphate. Bifunctional terpene synthase that converts dimethylallyl diphosphate (DMAPP) and isopentenyl diphosphate (IPP) into talaropentaene as a single product. The C-terminal prenyltransferase (PT) domain of MpMS catalyzes formation of hexaprenyl diphosphate (HexPP), whereas the N-terminal terpene cyclase (TC) domain catalyzes the cyclization of HexPP to talaropentaene. The protein is Talaropentaene synthase of Talaromyces verruculosus (Penicillium verruculosum).